The following is a 963-amino-acid chain: MAEAPAVPMGGAGLRERKIQASRTQEPSPPPDSLMSKMRTDESSKIESENKTFGRTPDGTVFTVPHTRDMVSQLLSPSEPKNLSDILVLTILALHILLLRSLPASIRIPVFAVIFLSWRAAYNIGIGWLLHMQSNHRTLVLWARKLRLFVDPATGQNPHPLLYRFIKRELETKIPEHYTFESAPIEYNTWLVFRRVVDLILMCDFTSYCLFAVACGSRPIGEGLFVMMLRWLAGTSLVLFNLWVKLDAHRVVKDFAWYWGDFFYLIDQDLTFDGVFEMAPHPMYSVGYAGYYGISLMAASYKVLFISILAHAAQFAFLVLVENPHIEKTYNAPPPRKRVVDHDTALHEDVGSRSNSFNSDTTPPLPVPSTTQPRSTHALVGSMDVHRVTDVSVLLIHLLFFALTIITPSTPAYQFFFVLNAAVWRIWYSAGIGYILDRQSTRKSWTRHFVKFGEGQDEAWRQWKGIYHLSMTTCYASFIAAAWKMYTLPQDWGYGLAILRHVLGASLIALQIWTSMSIYESLGEFGWFFGDFFYDESPKLTYSGIYRFLNNPERVLGLAGVWGAVLITNSRAMIFLALLSHTLSIAFIQLVERPHMQKLYGRSLRRDAGLVKSIKRSLPNSLKQFQGSVDKILDESIEFVEEVIDTARPKLAAGVNTFVKDTTALLHKYPARITITRLEPDLAGYEMKDYSLTVEGTQLAQFDKSTDATNNKSRNSRRSEDLVLEYGAPIKVKWTAPLNHSKKDWIGLYMVTHNSSREITKVSSQGRWIATNEGAFDSLTSEVGLKSSDVIIKYTGNDNDKTREVASGEIIFSGEKLWWNQGVFEFRYHHNGKHNVMAISRPFEIRIAKFDENEIPLDNYAVVRPAIEGALLPIIQNCLDRDPDIAPQNAEEAFGSQVDRDSKYTKRVVFAVQHMFGIEFAPEVVSADGNVRNLAWRICNAKKVLAPYSMSRASGATTPVQED.

The tract at residues 1–59 is disordered; that stretch reads MAEAPAVPMGGAGLRERKIQASRTQEPSPPPDSLMSKMRTDESSKIESENKTFGRTPDG. At 1–85 the chain is on the lumenal side; it reads MAEAPAVPMG…SPSEPKNLSD (85 aa). Over residues 38-52 the composition is skewed to basic and acidic residues; the sequence is MRTDESSKIESENKT. Residues 86–106 form a helical membrane-spanning segment; it reads ILVLTILALHILLLRSLPASI. At 107–109 the chain is on the cytoplasmic side; it reads RIP. A helical membrane pass occupies residues 110 to 130; that stretch reads VFAVIFLSWRAAYNIGIGWLL. The Lumenal segment spans residues 131 to 195; it reads HMQSNHRTLV…EYNTWLVFRR (65 aa). A helical transmembrane segment spans residues 196–216; sequence VVDLILMCDFTSYCLFAVACG. Residues 217-223 lie on the Cytoplasmic side of the membrane; the sequence is SRPIGEG. Residues 224-244 traverse the membrane as a helical segment; that stretch reads LFVMMLRWLAGTSLVLFNLWV. Topologically, residues 245-277 are lumenal; that stretch reads KLDAHRVVKDFAWYWGDFFYLIDQDLTFDGVFE. Residues 278 to 298 form a helical membrane-spanning segment; the sequence is MAPHPMYSVGYAGYYGISLMA. Over 299-300 the chain is Cytoplasmic; it reads AS. The chain crosses the membrane as a helical span at residues 301–321; the sequence is YKVLFISILAHAAQFAFLVLV. The Lumenal portion of the chain corresponds to 322–387; sequence ENPHIEKTYN…ALVGSMDVHR (66 aa). The disordered stretch occupies residues 349–373; it reads DVGSRSNSFNSDTTPPLPVPSTTQP. Over residues 352-373 the composition is skewed to polar residues; the sequence is SRSNSFNSDTTPPLPVPSTTQP. The helical transmembrane segment at 388–408 threads the bilayer; that stretch reads VTDVSVLLIHLLFFALTIITP. Over 409-414 the chain is Cytoplasmic; that stretch reads STPAYQ. A helical membrane pass occupies residues 415–435; sequence FFFVLNAAVWRIWYSAGIGYI. The Lumenal portion of the chain corresponds to 436 to 464; the sequence is LDRQSTRKSWTRHFVKFGEGQDEAWRQWK. Residues 465 to 487 traverse the membrane as a helical segment; that stretch reads GIYHLSMTTCYASFIAAAWKMYT. Residues 488 to 491 lie on the Cytoplasmic side of the membrane; it reads LPQD. Residues 492–512 form a helical membrane-spanning segment; the sequence is WGYGLAILRHVLGASLIALQI. Topologically, residues 513-571 are lumenal; sequence WTSMSIYESLGEFGWFFGDFFYDESPKLTYSGIYRFLNNPERVLGLAGVWGAVLITNSR. Residues 572-592 traverse the membrane as a helical segment; sequence AMIFLALLSHTLSIAFIQLVE. Over 593 to 963 the chain is Cytoplasmic; it reads RPHMQKLYGR…SGATTPVQED (371 aa).

This sequence belongs to the class VI-like SAM-binding methyltransferase superfamily. CHO2 family.

It is found in the endoplasmic reticulum membrane. The enzyme catalyses a 1,2-diacyl-sn-glycero-3-phosphoethanolamine + S-adenosyl-L-methionine = a 1,2-diacyl-sn-glycero-3-phospho-N-methylethanolamine + S-adenosyl-L-homocysteine + H(+). It participates in phospholipid metabolism; phosphatidylcholine biosynthesis. Catalyzes the first step of the methylation pathway of phosphatidylcholine biosynthesis, the SAM-dependent methylation of phosphatidylethanolamine (PE) to phosphatidylmonomethylethanolamine (PMME). This is Phosphatidylethanolamine N-methyltransferase (CHO2) from Coccidioides posadasii (strain C735) (Valley fever fungus).